The sequence spans 329 residues: Short-chain dehydrogenase/reductase prx4 (329 aa).

An N-terminal signal peptide occupies residues 1–21 (MIPRWQPASIALLLHLDTLRC). Residues serine 58, isoleucine 60, and asparagine 81 each coordinate NADP(+). The N-linked (GlcNAc...) asparagine glycan is linked to asparagine 91. NADP(+) is bound by residues aspartate 98, asparagine 121, lysine 161, tyrosine 194, lysine 198, and threonine 229. The active-site Proton acceptor is tyrosine 194. Lysine 198 acts as the Lowers pKa of active site Tyr in catalysis. Residues 238-258 (GPLMAAGLPVSSAHMVGLAVV) traverse the membrane as a helical segment.

This sequence belongs to the short-chain dehydrogenases/reductases (SDR) family.

It localises to the membrane. The protein operates within sesquiterpene biosynthesis. In terms of biological role, short-chain dehydrogenase/reductase; part of the gene cluster that mediates the biosynthesis of PR-toxin, a bicyclic sesquiterpene belonging to the eremophilane class and acting as a mycotoxin. The first step of the pathway is catalyzed by the aristolochene synthase which performs the cyclization of trans,trans-farnesyl diphosphate (FPP) to the bicyclic sesquiterpene aristolochene. Following the formation of aristolochene, the non-oxygenated aristolochene is converted to the trioxygenated intermediate eremofortin B, via 7-epi-neopetasone. This conversion appears to involve three enzymes, a hydroxysterol oxidase-like enzyme, the quinone-oxidase prx3 that forms the quinone-type-structure in the bicyclic nucleus of aristolochene with the C8-oxo group and the C-3 hydroxyl group, and the P450 monooxygenase prx9 that introduces the epoxide at the double bond between carbons 1 and 2. No monoxy or dioxy-intermediates have been reported to be released to the broth, so these three early oxidative reactions may be coupled together. Eremofortin B is further oxidized by another P450 monooxygenase, that introduces a second epoxide between carbons 7 and 11 prior to acetylation to eremofortin A by the acetyltransferase prx11. The second epoxidation may be performed by a second P450 monooxygenase. After the acetylation step, eremofortin A is converted to eremofortin C and then to PR-toxin. First the conversion of eremofortin A to eremofortin C proceeds by oxidation of the side chain of the molecule at C-12 and is catalyzed by the short-chain oxidoreductase prx1. The cytochrome P450 monooxygenase prx8 also plays a role in this step. The primary alcohol formed at C-12 is finally oxidized by the short-chain alcohol dehydrogenase prx4 that forms PR-toxin. This is Short-chain dehydrogenase/reductase prx4 from Penicillium rubens (strain ATCC 28089 / DSM 1075 / NRRL 1951 / Wisconsin 54-1255) (Penicillium chrysogenum).